The following is a 306-amino-acid chain: Aspartate carbamoyltransferase catalytic subunit (306 aa).

Residues Arg-51 and Thr-52 each contribute to the carbamoyl phosphate site. Lys-79 is an L-aspartate binding site. Positions 101, 129, and 132 each coordinate carbamoyl phosphate. Arg-162 and Arg-213 together coordinate L-aspartate. Positions 254 and 255 each coordinate carbamoyl phosphate.

The protein belongs to the aspartate/ornithine carbamoyltransferase superfamily. ATCase family. In terms of assembly, heterododecamer (2C3:3R2) of six catalytic PyrB chains organized as two trimers (C3), and six regulatory PyrI chains organized as three dimers (R2).

It catalyses the reaction carbamoyl phosphate + L-aspartate = N-carbamoyl-L-aspartate + phosphate + H(+). It participates in pyrimidine metabolism; UMP biosynthesis via de novo pathway; (S)-dihydroorotate from bicarbonate: step 2/3. Its function is as follows. Catalyzes the condensation of carbamoyl phosphate and aspartate to form carbamoyl aspartate and inorganic phosphate, the committed step in the de novo pyrimidine nucleotide biosynthesis pathway. This is Aspartate carbamoyltransferase catalytic subunit from Bacillus thuringiensis (strain Al Hakam).